Consider the following 222-residue polypeptide: 6,7-dimethyl-8-ribityllumazine synthase, chloroplastic (222 aa).

Residues 1–66 (MASFAASQTC…NRASFVVTNA (66 aa)) constitute a chloroplast transit peptide. 5-amino-6-(D-ribitylamino)uracil-binding positions include Phe-89, 122 to 124 (AYE), and 146 to 148 (AVV). Residue 151-152 (DT) participates in (2S)-2-hydroxy-3-oxobutyl phosphate binding. His-154 acts as the Proton donor in catalysis. Phe-179 contacts 5-amino-6-(D-ribitylamino)uracil. Arg-193 is a (2S)-2-hydroxy-3-oxobutyl phosphate binding site.

It belongs to the DMRL synthase family. Oligomer forming an icosahedral capsid.

The protein localises to the plastid. Its subcellular location is the chloroplast. It carries out the reaction (2S)-2-hydroxy-3-oxobutyl phosphate + 5-amino-6-(D-ribitylamino)uracil = 6,7-dimethyl-8-(1-D-ribityl)lumazine + phosphate + 2 H2O + H(+). It participates in cofactor biosynthesis; riboflavin biosynthesis; riboflavin from 2-hydroxy-3-oxobutyl phosphate and 5-amino-6-(D-ribitylamino)uracil: step 1/2. Its function is as follows. Catalyzes the formation of 6,7-dimethyl-8-ribityllumazine by condensation of 5-amino-6-(D-ribitylamino)uracil with 3,4-dihydroxy-2-butanone 4-phosphate. This is the penultimate step in the biosynthesis of riboflavin. The sequence is that of 6,7-dimethyl-8-ribityllumazine synthase, chloroplastic from Spinacia oleracea (Spinach).